A 205-amino-acid polypeptide reads, in one-letter code: dITP/XTP pyrophosphatase (205 aa).

8 to 13 serves as a coordination point for substrate; it reads SGNKGK. Catalysis depends on Asp69, which acts as the Proton acceptor. Asp69 serves as a coordination point for Mg(2+). Substrate contacts are provided by residues Ser70, 153-156, Lys176, and 181-182; these read HGYD and HR.

This sequence belongs to the HAM1 NTPase family. In terms of assembly, homodimer. Requires Mg(2+) as cofactor.

The catalysed reaction is XTP + H2O = XMP + diphosphate + H(+). It catalyses the reaction dITP + H2O = dIMP + diphosphate + H(+). The enzyme catalyses ITP + H2O = IMP + diphosphate + H(+). Functionally, pyrophosphatase that catalyzes the hydrolysis of nucleoside triphosphates to their monophosphate derivatives, with a high preference for the non-canonical purine nucleotides XTP (xanthosine triphosphate), dITP (deoxyinosine triphosphate) and ITP. Seems to function as a house-cleaning enzyme that removes non-canonical purine nucleotides from the nucleotide pool, thus preventing their incorporation into DNA/RNA and avoiding chromosomal lesions. The chain is dITP/XTP pyrophosphatase from Shewanella oneidensis (strain ATCC 700550 / JCM 31522 / CIP 106686 / LMG 19005 / NCIMB 14063 / MR-1).